A 439-amino-acid polypeptide reads, in one-letter code: GTPase Der (439 aa).

EngA-type G domains lie at 4–169 (AMVS…PQEE) and 177–352 (IKIA…EEYN). Residues 10-17 (GRPNVGKS), 57-61 (DTGGL), 120-123 (NKVD), 183-190 (GKPNVGKS), 230-234 (DTAGI), and 295-298 (NKWD) each bind GTP. One can recognise a KH-like domain in the interval 353–437 (KRITTGLLNN…PVVISTRKRG (85 aa)).

The protein belongs to the TRAFAC class TrmE-Era-EngA-EngB-Septin-like GTPase superfamily. EngA (Der) GTPase family. In terms of assembly, associates with the 50S ribosomal subunit.

Its function is as follows. GTPase that plays an essential role in the late steps of ribosome biogenesis. The protein is GTPase Der of Thermoanaerobacter pseudethanolicus (strain ATCC 33223 / 39E) (Clostridium thermohydrosulfuricum).